Consider the following 426-residue polypeptide: RuvB-like protein 1 (426 aa).

G62–T69 lines the ATP pocket.

It belongs to the RuvB family. In terms of assembly, component of the SWR1 chromatin remodeling complex, the INO80 chromatin remodeling complex, and of the R2TP complex.

It localises to the nucleus. The catalysed reaction is ATP + H2O = ADP + phosphate + H(+). Functionally, DNA helicase which participates in several chromatin remodeling complexes, including the SWR1 and the INO80 complexes. The SWR1 complex mediates the ATP-dependent exchange of histone H2A for the H2A variant HZT1 leading to transcriptional regulation of selected genes by chromatin remodeling. The INO80 complex remodels chromatin by shifting nucleosomes and is involved in DNA repair. Also involved in pre-rRNA processing. This chain is RuvB-like protein 1 (RVB1), found in Encephalitozoon cuniculi (strain GB-M1) (Microsporidian parasite).